Here is a 120-residue protein sequence, read N- to C-terminus: Large ribosomal subunit protein uL18 (120 aa).

Residues 1–23 (MKLSRKESVRRRHQRVRRKINGT) are disordered. A compositionally biased stretch (basic residues) spans 8–20 (SVRRRHQRVRRKI).

It belongs to the universal ribosomal protein uL18 family. Part of the 50S ribosomal subunit; part of the 5S rRNA/L5/L18/L25 subcomplex. Contacts the 5S and 23S rRNAs.

This is one of the proteins that bind and probably mediate the attachment of the 5S RNA into the large ribosomal subunit, where it forms part of the central protuberance. In Microcystis aeruginosa (strain NIES-843 / IAM M-2473), this protein is Large ribosomal subunit protein uL18.